Consider the following 96-residue polypeptide: Putative pterin-4-alpha-carbinolamine dehydratase (96 aa).

It belongs to the pterin-4-alpha-carbinolamine dehydratase family.

It carries out the reaction (4aS,6R)-4a-hydroxy-L-erythro-5,6,7,8-tetrahydrobiopterin = (6R)-L-erythro-6,7-dihydrobiopterin + H2O. In Prochlorococcus marinus (strain MIT 9303), this protein is Putative pterin-4-alpha-carbinolamine dehydratase.